Reading from the N-terminus, the 432-residue chain is Adenylosuccinate synthetase (432 aa).

GTP is bound by residues 13–19 (GDEGKGK) and 41–43 (GHT). Asp-14 (proton acceptor) is an active-site residue. Residues Asp-14 and Gly-41 each coordinate Mg(2+). Residues 14–17 (DEGK), 39–42 (NAGH), Thr-131, Arg-145, Gln-226, Thr-241, and Arg-305 contribute to the IMP site. The active-site Proton donor is the His-42. 301 to 307 (SVTGRAR) contributes to the substrate binding site. Residues Arg-307, 333 to 335 (KLD), and 416 to 418 (STG) each bind GTP.

This sequence belongs to the adenylosuccinate synthetase family. Homodimer. Requires Mg(2+) as cofactor.

It is found in the cytoplasm. The enzyme catalyses IMP + L-aspartate + GTP = N(6)-(1,2-dicarboxyethyl)-AMP + GDP + phosphate + 2 H(+). The protein operates within purine metabolism; AMP biosynthesis via de novo pathway; AMP from IMP: step 1/2. In terms of biological role, plays an important role in the de novo pathway of purine nucleotide biosynthesis. Catalyzes the first committed step in the biosynthesis of AMP from IMP. The chain is Adenylosuccinate synthetase from Neisseria gonorrhoeae (strain ATCC 700825 / FA 1090).